Consider the following 310-residue polypeptide: 4-hydroxyproline 2-epimerase (310 aa).

The Proton acceptor role is filled by Cys-88. Residues Gly-89–His-90, His-208, and Asp-232 contribute to the substrate site. Cys-236 acts as the Proton donor in catalysis. Gly-237 to Thr-238 lines the substrate pocket.

It belongs to the proline racemase family.

The catalysed reaction is trans-4-hydroxy-L-proline = cis-4-hydroxy-D-proline. In terms of biological role, catalyzes the epimerization of trans-4-hydroxy-L-proline (t4LHyp) to cis-4-hydroxy-D-proline (c4DHyp). Is likely involved in a degradation pathway that converts t4LHyp to alpha-ketoglutarate. Displays no proline racemase activity. This chain is 4-hydroxyproline 2-epimerase, found in Pseudomonas fluorescens (strain ATCC BAA-477 / NRRL B-23932 / Pf-5).